The chain runs to 384 residues: S-adenosylmethionine synthase (384 aa).

Residue H15 participates in ATP binding. D17 is a Mg(2+) binding site. E43 provides a ligand contact to K(+). The L-methionine site is built by E56 and Q99. The flexible loop stretch occupies residues Q99–R109. Residues D164–K166, R230–F231, D239, R245–K246, A262, and K266 contribute to the ATP site. D239 lines the L-methionine pocket. K270 contacts L-methionine.

The protein belongs to the AdoMet synthase family. Homotetramer; dimer of dimers. Requires Mg(2+) as cofactor. K(+) is required as a cofactor.

It is found in the cytoplasm. It carries out the reaction L-methionine + ATP + H2O = S-adenosyl-L-methionine + phosphate + diphosphate. The protein operates within amino-acid biosynthesis; S-adenosyl-L-methionine biosynthesis; S-adenosyl-L-methionine from L-methionine: step 1/1. In terms of biological role, catalyzes the formation of S-adenosylmethionine (AdoMet) from methionine and ATP. The overall synthetic reaction is composed of two sequential steps, AdoMet formation and the subsequent tripolyphosphate hydrolysis which occurs prior to release of AdoMet from the enzyme. The polypeptide is S-adenosylmethionine synthase (Histophilus somni (strain 129Pt) (Haemophilus somnus)).